The chain runs to 315 residues: Methionyl-tRNA formyltransferase (315 aa).

113 to 116 lines the (6S)-5,6,7,8-tetrahydrofolate pocket; it reads SLLP.

It belongs to the Fmt family.

The catalysed reaction is L-methionyl-tRNA(fMet) + (6R)-10-formyltetrahydrofolate = N-formyl-L-methionyl-tRNA(fMet) + (6S)-5,6,7,8-tetrahydrofolate + H(+). In terms of biological role, attaches a formyl group to the free amino group of methionyl-tRNA(fMet). The formyl group appears to play a dual role in the initiator identity of N-formylmethionyl-tRNA by promoting its recognition by IF2 and preventing the misappropriation of this tRNA by the elongation apparatus. The protein is Methionyl-tRNA formyltransferase of Yersinia pseudotuberculosis serotype O:1b (strain IP 31758).